A 97-amino-acid polypeptide reads, in one-letter code: MAAAKPENLSLVVHGPGDLRLENYPIPEPGPNXVLLKMHSVGICGSDVHYWQHGRIGNFVVKKPMVLGHEASGTXVKVGSLVTHLKPGDRXAXEPGA.

Cysteine 44 provides a ligand contact to Zn(2+). Tyrosine 50 is a substrate binding site. The Zn(2+) site is built by histidine 69 and glutamate 70.

It belongs to the zinc-containing alcohol dehydrogenase family. As to quaternary structure, homotetramer. Zn(2+) is required as a cofactor.

It is found in the mitochondrion membrane. Its subcellular location is the cell projection. The protein localises to the cilium. The protein resides in the flagellum. It carries out the reaction xylitol + NAD(+) = D-xylulose + NADH + H(+). The catalysed reaction is L-iditol + NAD(+) = keto-L-sorbose + NADH + H(+). The enzyme catalyses keto-D-fructose + NADH + H(+) = D-sorbitol + NAD(+). Its function is as follows. Polyol dehydrogenase that catalyzes the reversible NAD(+)-dependent oxidation of various sugar alcohols. Is active with xylitol, L-iditol and D-sorbitol (D-glucitol) as substrates, leading to the C2-oxidized products D-xylulose, L-sorbose and D-fructose, respectively. Is a key enzyme in the polyol pathway that interconverts glucose and fructose via sorbitol, which constitutes an important alternate route for glucose metabolism. May play a role in sperm motility by using sorbitol as an alternative energy source for sperm motility. This chain is Sorbitol dehydrogenase (SORD), found in Sus scrofa (Pig).